The sequence spans 367 residues: Alpha-2-HS-glycoprotein (367 aa).

The signal sequence occupies residues 1–18 (MKSLVLLLCLAQLWGCHS). Positions 27-133 (YRQPNCDDPE…KFSVVYAKCD (107 aa)) constitute a Cystatin fetuin-A-type 1 domain. 6 cysteine pairs are disulfide-bonded: Cys32–Cys358, Cys89–Cys100, Cys114–Cys132, Cys146–Cys149, Cys208–Cys219, and Cys230–Cys247. Ser134 bears the Phosphoserine mark. Phosphoserine; by FAM20C occurs at positions 135 and 138. The region spanning 144 to 255 (KVCQDCPLLA…TCMVFQTQPV (112 aa)) is the Cystatin fetuin-A-type 2 domain. N-linked (GlcNAc...) (complex) asparagine glycans are attached at residues Asn156 and Asn176. Residues 255-298 (VSSQPQPEGANEAVPTPVVDPDAPPSPPLGAPGLPPAGSPPDSH) form a disordered region. Thr270 carries O-linked (GalNAc...) threonine glycosylation. Pro residues predominate over residues 276-293 (DAPPSPPLGAPGLPPAGS). 2 O-linked (GalNAc...) serine glycosylation sites follow: Ser280 and Ser293. Residues 301 to 340 (LAAPPGHQLHRAHYDLRHTFMGVVSLGSPSGEVSHPRKTR) constitute a propeptide, connecting peptide. Phosphothreonine; by FAM20C is present on Thr319. 3 positions are modified to phosphoserine; by FAM20C: Ser325, Ser328, and Ser330. O-linked (GalNAc...) threonine glycosylation is found at Thr339 and Thr341. Ser346 carries O-linked (GalNAc...) serine glycosylation.

It belongs to the fetuin family. As to quaternary structure, alpha-2-HS glycoprotein derives from this precursor, when the connecting peptide is cleaved off. The two chains A and B are held together by a single disulfide bond. Phosphorylated by FAM20C in the extracellular medium. In terms of processing, O- and N-glycosylated. O-glycosylated with core 1 or possibly core 8 glycans. N-glycan at Asn-156: Hex5HexNAc4; N-glycan heterogeneity at Asn-176: Hex5HexNAc4 (major) and Hex6HexNAc5 (minor). In terms of tissue distribution, synthesized in liver and selectively concentrated in bone matrix. Secreted in plasma. It is also found in dentin in much higher quantities than other plasma proteins.

The protein resides in the secreted. Promotes endocytosis, possesses opsonic properties and influences the mineral phase of bone. Shows affinity for calcium and barium ions. This chain is Alpha-2-HS-glycoprotein (AHSG), found in Homo sapiens (Human).